The chain runs to 701 residues: Serologically defined colon cancer antigen 8 homolog (701 aa).

Acidic residues predominate over residues 1-13 (MKPSLESDEEEEL). Disordered regions lie at residues 1 to 67 (MKPS…VQQS) and 84 to 114 (ANIQ…GVHN). Positions 45-67 (SEPNQQELLSSVQQNPCSPVQQS) are enriched in polar residues. Coiled-coil stretches lie at residues 119–173 (INNQ…LKEY), 203–258 (HKWR…AVAA), and 323–695 (QQVK…AGKR). Residues 364 to 387 (LASEQDKISQAREAARSESKKERE) are disordered.

It is found in the cytoplasm. It localises to the cytoskeleton. Its subcellular location is the microtubule organizing center. The protein resides in the centrosome. The protein localises to the centriole. It is found in the cilium basal body. It localises to the cell junction. In terms of biological role, plays a role in the establishment of cell polarity and epithelial lumen formation. Also plays an essential role in ciliogenesis and subsequent Hedgehog signaling pathway that requires the presence of intact primary cilia for pathway activation. Mechanistically, interacts with and mediates RABEP2 centrosomal localization which is critical for ciliogenesis. In Danio rerio (Zebrafish), this protein is Serologically defined colon cancer antigen 8 homolog (Sdccag8).